The sequence spans 293 residues: Pantothenate synthetase (293 aa).

30 to 37 (MGYLHKGH) contacts ATP. The Proton donor role is filled by His-37. Residue Gln-61 participates in (R)-pantoate binding. Gln-61 contacts beta-alanine. 147–150 (GEKD) is a binding site for ATP. Gln-153 provides a ligand contact to (R)-pantoate. ATP contacts are provided by residues Val-176 and 184–187 (CSSR).

Belongs to the pantothenate synthetase family. In terms of assembly, homodimer.

It is found in the cytoplasm. It carries out the reaction (R)-pantoate + beta-alanine + ATP = (R)-pantothenate + AMP + diphosphate + H(+). Its pathway is cofactor biosynthesis; (R)-pantothenate biosynthesis; (R)-pantothenate from (R)-pantoate and beta-alanine: step 1/1. In terms of biological role, catalyzes the condensation of pantoate with beta-alanine in an ATP-dependent reaction via a pantoyl-adenylate intermediate. The chain is Pantothenate synthetase from Brucella canis (strain ATCC 23365 / NCTC 10854 / RM-666).